A 268-amino-acid polypeptide reads, in one-letter code: MNNINDSSAIHITPETFVKQIRSLGRYNFPEPALVDPDGIGIVGIGGNLAPETLISAYAQGLFPWFNDDEPIAWWCPEPRCVMQPTDYQPSKSLRKQANNARWQLTLNQAFNEVIHACSLPRSNGLPEGEHTWIHDDMIEAYNELHAQGFAHSVEVWDDQGQLVGGLYGLKIGSIYFGESMFHIASNASKLAFWGLMRLCTQSNVTLVDCQLPNEHLMSLGAITLSRTEFLTQLDTLISNGSDAWHKNSHRPLAVSLLGNLQPWQLNP.

Belongs to the L/F-transferase family.

The protein resides in the cytoplasm. The enzyme catalyses N-terminal L-lysyl-[protein] + L-leucyl-tRNA(Leu) = N-terminal L-leucyl-L-lysyl-[protein] + tRNA(Leu) + H(+). The catalysed reaction is N-terminal L-arginyl-[protein] + L-leucyl-tRNA(Leu) = N-terminal L-leucyl-L-arginyl-[protein] + tRNA(Leu) + H(+). It carries out the reaction L-phenylalanyl-tRNA(Phe) + an N-terminal L-alpha-aminoacyl-[protein] = an N-terminal L-phenylalanyl-L-alpha-aminoacyl-[protein] + tRNA(Phe). In terms of biological role, functions in the N-end rule pathway of protein degradation where it conjugates Leu, Phe and, less efficiently, Met from aminoacyl-tRNAs to the N-termini of proteins containing an N-terminal arginine or lysine. In Psychrobacter arcticus (strain DSM 17307 / VKM B-2377 / 273-4), this protein is Leucyl/phenylalanyl-tRNA--protein transferase.